The following is a 268-amino-acid chain: Cytochrome b-c1 complex subunit Rieske-5, mitochondrial (268 aa).

The transit peptide at 1–56 (MLRIAGRKLSSSAAARSSSAFFTRNPFTFTDDSSSPTRSPSPTSLASQFLDQFRGF) directs the protein to the mitochondrion. At 57-105 (SSNSVSPAHQTGLVSDLPATVAAIKNPSSKIVYDDSNHERYPPGDPSKR) the chain is on the mitochondrial matrix side. Residues 106–128 (AFAYFVLTGGRFVYASLVRLLIL) form a helical membrane-spanning segment. Over 129–268 (KFVLSMSASK…FMEENKLLIG (140 aa)) the chain is Mitochondrial intermembrane. Residues 178-266 (INLANSVDLG…YSFMEENKLL (89 aa)) form the Rieske domain. [2Fe-2S] cluster is bound by residues cysteine 211, histidine 213, cysteine 230, and histidine 233. A disulfide bond links cysteine 216 and cysteine 232.

Belongs to the Rieske iron-sulfur protein family. In terms of assembly, component of the ubiquinol-cytochrome c oxidoreductase (cytochrome b-c1 complex, complex III, CIII), a multisubunit enzyme composed of 3 respiratory subunits cytochrome b, cytochrome c1 and Rieske protein, 2 core protein subunits, and several low-molecular weight protein subunits. The complex exists as an obligatory dimer and forms supercomplexes (SCs) in the inner mitochondrial membrane with cytochrome c oxidase (complex IV, CIV). It depends on [2Fe-2S] cluster as a cofactor. As to expression, high levels are seen in the flowers while a low level expression is seen in the roots, leaves and stems.

It localises to the mitochondrion inner membrane. It carries out the reaction a quinol + 2 Fe(III)-[cytochrome c](out) = a quinone + 2 Fe(II)-[cytochrome c](out) + 2 H(+)(out). Component of the ubiquinol-cytochrome c oxidoreductase, a multisubunit transmembrane complex that is part of the mitochondrial electron transport chain which drives oxidative phosphorylation. The respiratory chain contains 3 multisubunit complexes succinate dehydrogenase (complex II, CII), ubiquinol-cytochrome c oxidoreductase (cytochrome b-c1 complex, complex III, CIII) and cytochrome c oxidase (complex IV, CIV), that cooperate to transfer electrons derived from NADH and succinate to molecular oxygen, creating an electrochemical gradient over the inner membrane that drives transmembrane transport and the ATP synthase. The cytochrome b-c1 complex catalyzes electron transfer from ubiquinol to cytochrome c, linking this redox reaction to translocation of protons across the mitochondrial inner membrane, with protons being carried across the membrane as hydrogens on the quinol. In the process called Q cycle, 2 protons are consumed from the matrix, 4 protons are released into the intermembrane space and 2 electrons are passed to cytochrome c. The Rieske protein is a catalytic core subunit containing a [2Fe-2S] iron-sulfur cluster. It cycles between 2 conformational states during catalysis to transfer electrons from the quinol bound in the Q(0) site in cytochrome b to cytochrome c1. The sequence is that of Cytochrome b-c1 complex subunit Rieske-5, mitochondrial from Nicotiana tabacum (Common tobacco).